Reading from the N-terminus, the 216-residue chain is Glycerol-3-phosphate acyltransferase (216 aa).

The next 5 membrane-spanning stretches (helical) occupy residues 5–25 (LIAL…FGLV), 70–90 (IAAA…AGAF), 118–138 (VVFW…AAIF), 140–160 (ISSL…LAWG), and 164–184 (VAIM…ANIS). The span at 192-201 (PRIGGKKSET) shows a compositional bias: basic and acidic residues. Residues 192–216 (PRIGGKKSETSADVSDGDDPDTPAT) are disordered. Residues 206-216 (SDGDDPDTPAT) are compositionally biased toward acidic residues.

It belongs to the PlsY family. In terms of assembly, probably interacts with PlsX.

It is found in the cell inner membrane. The catalysed reaction is an acyl phosphate + sn-glycerol 3-phosphate = a 1-acyl-sn-glycero-3-phosphate + phosphate. It participates in lipid metabolism; phospholipid metabolism. Catalyzes the transfer of an acyl group from acyl-phosphate (acyl-PO(4)) to glycerol-3-phosphate (G3P) to form lysophosphatidic acid (LPA). This enzyme utilizes acyl-phosphate as fatty acyl donor, but not acyl-CoA or acyl-ACP. The protein is Glycerol-3-phosphate acyltransferase of Maricaulis maris (strain MCS10) (Caulobacter maris).